A 93-amino-acid polypeptide reads, in one-letter code: MLKVNEYFDGAVKSIGFQSETLPATVGVMAPGAYTFGTDQKETMTVVSGALTVKLPGQDGWQRFAAAEHFEVEANQSFELKVEVATAYLCTYG.

The protein belongs to the nucleoside phosphorylase PpnP family.

It carries out the reaction a purine D-ribonucleoside + phosphate = a purine nucleobase + alpha-D-ribose 1-phosphate. The catalysed reaction is adenosine + phosphate = alpha-D-ribose 1-phosphate + adenine. The enzyme catalyses cytidine + phosphate = cytosine + alpha-D-ribose 1-phosphate. It catalyses the reaction guanosine + phosphate = alpha-D-ribose 1-phosphate + guanine. It carries out the reaction inosine + phosphate = alpha-D-ribose 1-phosphate + hypoxanthine. The catalysed reaction is thymidine + phosphate = 2-deoxy-alpha-D-ribose 1-phosphate + thymine. The enzyme catalyses uridine + phosphate = alpha-D-ribose 1-phosphate + uracil. It catalyses the reaction xanthosine + phosphate = alpha-D-ribose 1-phosphate + xanthine. In terms of biological role, catalyzes the phosphorolysis of diverse nucleosides, yielding D-ribose 1-phosphate and the respective free bases. Can use uridine, adenosine, guanosine, cytidine, thymidine, inosine and xanthosine as substrates. Also catalyzes the reverse reactions. The sequence is that of Pyrimidine/purine nucleoside phosphorylase from Magnetococcus marinus (strain ATCC BAA-1437 / JCM 17883 / MC-1).